Here is a 79-residue protein sequence, read N- to C-terminus: Potassium channel toxin Hge-beta-KTx (79 aa).

The signal sequence occupies residues 1–21; sequence MAKSFFAAFLIIMLISSLVDG. A BetaSPN-type CS-alpha/beta domain is found at 48–79; it reads EYMCPVVSSFCKQHCARLGKSGQCDLLECICS. Cystine bridges form between C51–C71, C58–C76, and C62–C78.

As to expression, expressed by the venom gland.

It localises to the secreted. The full peptide presents antibacterial and cytotoxic activities. The synthetic C-terminus (AA 33-76) inhibits voltage-gated potassium channels Kv1.1/KCNA1, Kv1.2/KCNA2, and Kv1.3/KCNA3. This Hoffmannihadrurus gertschi (Scorpion) protein is Potassium channel toxin Hge-beta-KTx.